Here is a 712-residue protein sequence, read N- to C-terminus: Capsid protein (712 aa).

Disordered stretches follow at residues 614-633 (LTST…KEVR) and 646-665 (CWMS…PESS). A coiled-coil region spans residues 670–706 (YDNHTKLAKRVKKEIHNQNRRHRLLLAHLRRERDRLL).

It belongs to the anelloviridae capsid protein family.

It is found in the virion. In terms of biological role, self-assembles to form an icosahedral capsid with a T=1 symmetry, about 30 nm in diameter, and consisting of 60 capsid proteins. The capsid encapsulates the genomic DNA. Capsid protein is involved in attachment and entry into the host cell. In Torque teno tamarin virus (isolate So-TTV2), this protein is Capsid protein.